A 184-amino-acid polypeptide reads, in one-letter code: Der GTPase-activating protein YihI (184 aa).

2 disordered regions span residues methionine 1–serine 106 and leucine 159–leucine 184. Residues valine 8 to arginine 32 show a composition bias toward basic and acidic residues. Residues leucine 159 to glutamate 169 are compositionally biased toward acidic residues.

The protein belongs to the YihI family. As to quaternary structure, interacts with Der.

Functionally, a GTPase-activating protein (GAP) that modifies Der/EngA GTPase function. May play a role in ribosome biogenesis. This Pectobacterium atrosepticum (strain SCRI 1043 / ATCC BAA-672) (Erwinia carotovora subsp. atroseptica) protein is Der GTPase-activating protein YihI.